The sequence spans 122 residues: Large ribosomal subunit protein uL24 (122 aa).

This sequence belongs to the universal ribosomal protein uL24 family. As to quaternary structure, part of the 50S ribosomal subunit.

Its function is as follows. One of two assembly initiator proteins, it binds directly to the 5'-end of the 23S rRNA, where it nucleates assembly of the 50S subunit. In terms of biological role, located at the polypeptide exit tunnel on the outside of the subunit. This Methanosarcina mazei (strain ATCC BAA-159 / DSM 3647 / Goe1 / Go1 / JCM 11833 / OCM 88) (Methanosarcina frisia) protein is Large ribosomal subunit protein uL24.